Here is a 378-residue protein sequence, read N- to C-terminus: Homeobox protein Meis3 (378 aa).

Positions 24–57 (FSEAAPSVPRAPGPYTPHRPPQLQAPGLDSDSLK) are disordered. A compositionally biased stretch (pro residues) spans 32–43 (PRAPGPYTPHRP). The region spanning 99–182 (GGDVCSSDSF…PIDLVIEDRD (84 aa)) is the MEIS N-terminal domain. The segment at 203-265 (NTTWIRDHED…DEDLDLERRR (63 aa)) is disordered. Over residues 230 to 244 (SQSGDNSSDQGDGLD) the composition is skewed to low complexity. A DNA-binding region (homeobox; TALE-type) is located at residues 265-327 (RNKKRGIFPK…NARRRIVQPM (63 aa)).

It belongs to the TALE/MEIS homeobox family. Expressed at high levels in the brain. Significant expression also observed in the heart, spleen and lung. Expressed in pancreatic islets (beta-cells and non-beta-cells).

The protein resides in the nucleus. Its function is as follows. Transcriptional regulator which directly modulates PDPK1 expression, thus promoting survival of pancreatic beta-cells. Also regulates expression of NDFIP1, BNIP3, and CCNG1. The chain is Homeobox protein Meis3 (Meis3) from Mus musculus (Mouse).